Here is a 700-residue protein sequence, read N- to C-terminus: Elongation factor G (700 aa).

The 283-residue stretch at 8 to 290 (ERYRNIGISA…AVIDYLPAPT (283 aa)) folds into the tr-type G domain. GTP-binding positions include 17–24 (AHIDAGKT), 88–92 (DTPGH), and 142–145 (NKMD).

Belongs to the TRAFAC class translation factor GTPase superfamily. Classic translation factor GTPase family. EF-G/EF-2 subfamily.

The protein resides in the cytoplasm. Its function is as follows. Catalyzes the GTP-dependent ribosomal translocation step during translation elongation. During this step, the ribosome changes from the pre-translocational (PRE) to the post-translocational (POST) state as the newly formed A-site-bound peptidyl-tRNA and P-site-bound deacylated tRNA move to the P and E sites, respectively. Catalyzes the coordinated movement of the two tRNA molecules, the mRNA and conformational changes in the ribosome. The protein is Elongation factor G of Glaesserella parasuis serovar 5 (strain SH0165) (Haemophilus parasuis).